A 906-amino-acid polypeptide reads, in one-letter code: Protein translocase subunit SecA (906 aa).

ATP-binding positions include Gln-86, 104–108 (GEGKT), and Asp-511. Basic and acidic residues-rich tracts occupy residues 853-865 (HESVIDNNQRHDE) and 877-888 (VRREGPKVKRND). Residues 853-906 (HESVIDNNQRHDEDEQEEAPKVQQVRREGPKVKRNDPCPCGSGKKYKQCHSKVE) are disordered. Cys-890, Cys-892, Cys-901, and His-902 together coordinate Zn(2+). The segment covering 896-906 (KKYKQCHSKVE) has biased composition (basic residues).

It belongs to the SecA family. In terms of assembly, monomer and homodimer. Part of the essential Sec protein translocation apparatus which comprises SecA, SecYEG and auxiliary proteins SecDF-YajC and YidC. Zn(2+) serves as cofactor.

The protein localises to the cell inner membrane. It is found in the cytoplasm. It catalyses the reaction ATP + H2O + cellular proteinSide 1 = ADP + phosphate + cellular proteinSide 2.. Its function is as follows. Part of the Sec protein translocase complex. Interacts with the SecYEG preprotein conducting channel. Has a central role in coupling the hydrolysis of ATP to the transfer of proteins into and across the cell membrane, serving both as a receptor for the preprotein-SecB complex and as an ATP-driven molecular motor driving the stepwise translocation of polypeptide chains across the membrane. This is Protein translocase subunit SecA from Francisella tularensis subsp. mediasiatica (strain FSC147).